Consider the following 319-residue polypeptide: Malate dehydrogenase (319 aa).

NAD(+)-binding positions include 10 to 15 (GAGNIG) and Asp-34. Arg-83 and Arg-89 together coordinate substrate. Residues Asn-96 and 119 to 121 (ITN) each bind NAD(+). Substrate-binding residues include Asn-121 and Arg-152. His-176 acts as the Proton acceptor in catalysis.

Belongs to the LDH/MDH superfamily. MDH type 3 family.

It carries out the reaction (S)-malate + NAD(+) = oxaloacetate + NADH + H(+). Catalyzes the reversible oxidation of malate to oxaloacetate. The protein is Malate dehydrogenase of Francisella tularensis subsp. mediasiatica (strain FSC147).